A 104-amino-acid polypeptide reads, in one-letter code: Larval cuticle protein 65Ab1 (104 aa).

Positions 1–18 (MKFLIVFVALFAMAVARP) are cleaved as a signal peptide. Positions 32 to 102 (PEKWSSDVET…PQGAHLPVAP (71 aa)) constitute a Chitin-binding type R&amp;R domain.

Functionally, component of the cuticle of the larva. This is Larval cuticle protein 65Ab1 from Drosophila melanogaster (Fruit fly).